The chain runs to 255 residues: S-adenosyl-L-methionine-dependent uroporphyrinogen III methyltransferase (255 aa).

Residues P15, 91–93, 121–122, M175, and A232 each bind S-adenosyl-L-homocysteine; these read GGD and TS.

Belongs to the precorrin methyltransferase family. Homodimer.

The catalysed reaction is uroporphyrinogen III + 2 S-adenosyl-L-methionine = precorrin-2 + 2 S-adenosyl-L-homocysteine + H(+). It participates in porphyrin-containing compound metabolism; siroheme biosynthesis; precorrin-2 from uroporphyrinogen III: step 1/1. In terms of biological role, involved in the archaeal biosynthesis of heme. Catalyzes the methylation of carbons 2 and 7 of uroporphyrinogen-III (UROGEN) to yield precorrin-2. It does not catalyze the overmethylation of precorrin-2 to trimethylpyrrocorphin. The protein is S-adenosyl-L-methionine-dependent uroporphyrinogen III methyltransferase of Methanosarcina barkeri (strain Fusaro / DSM 804).